Reading from the N-terminus, the 391-residue chain is 3-ketoacyl-CoA thiolase (391 aa).

Cys95 acts as the Acyl-thioester intermediate in catalysis. Catalysis depends on proton acceptor residues His347 and Cys377.

The protein belongs to the thiolase-like superfamily. Thiolase family. Heterotetramer of two alpha chains (FadB) and two beta chains (FadA).

It is found in the cytoplasm. It carries out the reaction an acyl-CoA + acetyl-CoA = a 3-oxoacyl-CoA + CoA. It functions in the pathway lipid metabolism; fatty acid beta-oxidation. Catalyzes the final step of fatty acid oxidation in which acetyl-CoA is released and the CoA ester of a fatty acid two carbons shorter is formed. In Vibrio parahaemolyticus serotype O3:K6 (strain RIMD 2210633), this protein is 3-ketoacyl-CoA thiolase.